The following is a 190-amino-acid chain: NADH-quinone oxidoreductase subunit B (190 aa).

The [4Fe-4S] cluster site is built by Cys39, Cys40, Cys104, and Cys135.

The protein belongs to the complex I 20 kDa subunit family. In terms of assembly, NDH-1 is composed of 14 different subunits. Subunits NuoB, C, D, E, F, and G constitute the peripheral sector of the complex. It depends on [4Fe-4S] cluster as a cofactor.

It localises to the cell inner membrane. The enzyme catalyses a quinone + NADH + 5 H(+)(in) = a quinol + NAD(+) + 4 H(+)(out). Functionally, NDH-1 shuttles electrons from NADH, via FMN and iron-sulfur (Fe-S) centers, to quinones in the respiratory chain. The immediate electron acceptor for the enzyme in this species is believed to be a menaquinone. Couples the redox reaction to proton translocation (for every two electrons transferred, four hydrogen ions are translocated across the cytoplasmic membrane), and thus conserves the redox energy in a proton gradient. This is NADH-quinone oxidoreductase subunit B from Chlorobium phaeobacteroides (strain BS1).